Here is a 253-residue protein sequence, read N- to C-terminus: Ubiquinone/menaquinone biosynthesis C-methyltransferase UbiE (253 aa).

S-adenosyl-L-methionine contacts are provided by residues Thr-76, Asp-97, 125–126 (NA), and Ser-142.

This sequence belongs to the class I-like SAM-binding methyltransferase superfamily. MenG/UbiE family.

The enzyme catalyses a 2-demethylmenaquinol + S-adenosyl-L-methionine = a menaquinol + S-adenosyl-L-homocysteine + H(+). It catalyses the reaction a 2-methoxy-6-(all-trans-polyprenyl)benzene-1,4-diol + S-adenosyl-L-methionine = a 5-methoxy-2-methyl-3-(all-trans-polyprenyl)benzene-1,4-diol + S-adenosyl-L-homocysteine + H(+). It functions in the pathway quinol/quinone metabolism; menaquinone biosynthesis; menaquinol from 1,4-dihydroxy-2-naphthoate: step 2/2. Its pathway is cofactor biosynthesis; ubiquinone biosynthesis. In terms of biological role, methyltransferase required for the conversion of demethylmenaquinol (DMKH2) to menaquinol (MKH2) and the conversion of 2-polyprenyl-6-methoxy-1,4-benzoquinol (DDMQH2) to 2-polyprenyl-3-methyl-6-methoxy-1,4-benzoquinol (DMQH2). The sequence is that of Ubiquinone/menaquinone biosynthesis C-methyltransferase UbiE from Xanthomonas campestris pv. campestris (strain ATCC 33913 / DSM 3586 / NCPPB 528 / LMG 568 / P 25).